The sequence spans 685 residues: Galactocerebrosidase (685 aa).

Positions 1–42 are cleaved as a signal peptide; sequence MAEWLLSASRQRRVKAMTAAAGSAGRAAVPFLLCALLAPGGA. Threonine 109 serves as a coordination point for substrate. The N-linked (GlcNAc...) asparagine glycan is linked to asparagine 143. Substrate is bound by residues tryptophan 151 and asparagine 197. Catalysis depends on glutamate 198, which acts as the Proton donor/acceptor. Glutamate 274 serves as the catalytic Nucleophile. Residues cysteine 287 and cysteine 394 are joined by a disulfide bond. Residue asparagine 379 is glycosylated (N-linked (GlcNAc...) asparagine). Position 396 (arginine 396) interacts with substrate. N-linked (GlcNAc...) asparagine glycosylation is found at asparagine 403, asparagine 451, asparagine 556, asparagine 559, and asparagine 602.

Belongs to the glycosyl hydrolase 59 family.

It localises to the lysosome. The enzyme catalyses a beta-D-galactosyl-(1&lt;-&gt;1')-N-acylsphing-4-enine + H2O = an N-acylsphing-4-enine + D-galactose. The catalysed reaction is beta-D-galactosyl-(1&lt;-&gt;1)-sphing-4-enine + H2O = sphing-4-enine + D-galactose. It catalyses the reaction a D-galactosylceramide + H2O = an N-acyl-sphingoid base + D-galactose. Its function is as follows. Hydrolyzes the galactose ester bonds of glycolipids such as galactosylceramide and galactosylsphingosine. Enzyme with very low activity responsible for the lysosomal catabolism of galactosylceramide, a major lipid in myelin, kidney and epithelial cells of small intestine and colon. The protein is Galactocerebrosidase of Macaca mulatta (Rhesus macaque).